The sequence spans 160 residues: Phosphopantetheine adenylyltransferase (160 aa).

Serine 10 lines the substrate pocket. Residues 10 to 11 (SF) and histidine 18 each bind ATP. Substrate-binding residues include lysine 42, threonine 74, and arginine 88. Residues 89-91 (GLR), glutamate 99, and 124-130 (FYYISSR) contribute to the ATP site.

It belongs to the bacterial CoaD family. As to quaternary structure, homohexamer. Mg(2+) serves as cofactor.

The protein resides in the cytoplasm. The enzyme catalyses (R)-4'-phosphopantetheine + ATP + H(+) = 3'-dephospho-CoA + diphosphate. It functions in the pathway cofactor biosynthesis; coenzyme A biosynthesis; CoA from (R)-pantothenate: step 4/5. Reversibly transfers an adenylyl group from ATP to 4'-phosphopantetheine, yielding dephospho-CoA (dPCoA) and pyrophosphate. This is Phosphopantetheine adenylyltransferase from Bdellovibrio bacteriovorus (strain ATCC 15356 / DSM 50701 / NCIMB 9529 / HD100).